Consider the following 92-residue polypeptide: DNA-directed RNA polymerase subunit omega (92 aa).

Belongs to the RNA polymerase subunit omega family. As to quaternary structure, the RNAP catalytic core consists of 2 alpha, 1 beta, 1 beta' and 1 omega subunit. When a sigma factor is associated with the core the holoenzyme is formed, which can initiate transcription.

The catalysed reaction is RNA(n) + a ribonucleoside 5'-triphosphate = RNA(n+1) + diphosphate. Functionally, promotes RNA polymerase assembly. Latches the N- and C-terminal regions of the beta' subunit thereby facilitating its interaction with the beta and alpha subunits. This is DNA-directed RNA polymerase subunit omega from Shewanella sp. (strain ANA-3).